Consider the following 362-residue polypeptide: 3-dehydroquinate synthase (362 aa).

Residues 71–76, 105–109, 129–130, Lys142, and Lys151 contribute to the NAD(+) site; these read DGEQYK, GVIGD, and TT. Zn(2+) is bound by residues Glu184, His247, and His264.

It belongs to the sugar phosphate cyclases superfamily. Dehydroquinate synthase family. Requires NAD(+) as cofactor. Co(2+) is required as a cofactor. The cofactor is Zn(2+).

The protein resides in the cytoplasm. It carries out the reaction 7-phospho-2-dehydro-3-deoxy-D-arabino-heptonate = 3-dehydroquinate + phosphate. Its pathway is metabolic intermediate biosynthesis; chorismate biosynthesis; chorismate from D-erythrose 4-phosphate and phosphoenolpyruvate: step 2/7. Catalyzes the conversion of 3-deoxy-D-arabino-heptulosonate 7-phosphate (DAHP) to dehydroquinate (DHQ). This is 3-dehydroquinate synthase from Haemophilus ducreyi (strain 35000HP / ATCC 700724).